Reading from the N-terminus, the 202-residue chain is LexA repressor (202 aa).

Positions 28–48 (RAEIAQELGFKSPNAAEEHLK) form a DNA-binding region, H-T-H motif. Residues Ser-123 and Lys-160 each act as for autocatalytic cleavage activity in the active site.

Belongs to the peptidase S24 family. In terms of assembly, homodimer.

The catalysed reaction is Hydrolysis of Ala-|-Gly bond in repressor LexA.. Functionally, represses a number of genes involved in the response to DNA damage (SOS response), including recA and lexA. In the presence of single-stranded DNA, RecA interacts with LexA causing an autocatalytic cleavage which disrupts the DNA-binding part of LexA, leading to derepression of the SOS regulon and eventually DNA repair. The sequence is that of LexA repressor from Pseudomonas chlororaphis (Pseudomonas aureofaciens).